Here is a 204-residue protein sequence, read N- to C-terminus: Ribosomal RNA small subunit methyltransferase G (204 aa).

The S-adenosyl-L-methionine site is built by glycine 73, phenylalanine 78, and arginine 139.

It belongs to the methyltransferase superfamily. RNA methyltransferase RsmG family.

The protein resides in the cytoplasm. The catalysed reaction is guanosine(527) in 16S rRNA + S-adenosyl-L-methionine = N(7)-methylguanosine(527) in 16S rRNA + S-adenosyl-L-homocysteine. Its function is as follows. Specifically methylates the N7 position of guanine in position 527 of 16S rRNA. The chain is Ribosomal RNA small subunit methyltransferase G from Coxiella burnetii (strain Dugway 5J108-111).